Consider the following 458-residue polypeptide: Retinoic acid receptor gamma (458 aa).

Residues 1–89 (MATNKERLFA…PPPPPRVYKP (89 aa)) form a modulating region. Arg-34 is subject to Omega-N-methylarginine. The disordered stretch occupies residues 58–83 (MASLSVETQSTSSEEMVPSSPSPPPP). Residues 62-71 (SVETQSTSSE) show a composition bias toward polar residues. 2 consecutive NR C4-type zinc fingers follow at residues 90–110 (CFVC…CEGC) and 126–150 (CHRD…LQKC). Positions 90-155 (CFVCNDKSSG…RLQKCFEVGM (66 aa)) form a DNA-binding region, nuclear receptor. A hinge region spans residues 156-184 (SKEAVRNDRNKKKKEVKEEGSPDSYELSP). A disordered region spans residues 161–180 (RNDRNKKKKEVKEEGSPDSY). Residues Lys-172 and Lys-401 each participate in a glycyl lysine isopeptide (Lys-Gly) (interchain with G-Cter in SUMO2) cross-link. The NR LBD domain maps to 185 to 419 (QLEELITKVS…PLIREMLENP (235 aa)). The interval 409–458 (PPLIREMLENPEMFEDDSSKPGPHPKASSEDEAPGGQGKRGQSPQPDQGP) is disordered. Over residues 448-458 (RGQSPQPDQGP) the composition is skewed to polar residues.

Belongs to the nuclear hormone receptor family. NR1 subfamily. As to quaternary structure, homodimer. Heterodimer with a RXR molecule. Binds DNA preferentially as a RAR/RXR heterodimer. Forms a complex with PUS1 and the SRA1 RNA in the nucleus.

The protein localises to the nucleus. It is found in the cytoplasm. Its function is as follows. Receptor for retinoic acid. Retinoic acid receptors bind as heterodimers to their target response elements in response to their ligands, all-trans or 9-cis retinoic acid, and regulate gene expression in various biological processes. The RAR/RXR heterodimers bind to the retinoic acid response elements (RARE) composed of tandem 5'-AGGTCA-3' sites known as DR1-DR5. In the absence of ligand, acts mainly as an activator of gene expression due to weak binding to corepressors. Required for limb bud development. In concert with RARA or RARB, required for skeletal growth, matrix homeostasis and growth plate function. This Mus musculus (Mouse) protein is Retinoic acid receptor gamma (Rarg).